The sequence spans 328 residues: tRNA(Ile)-lysidine synthase (328 aa).

35–40 contributes to the ATP binding site; it reads SGGADS.

This sequence belongs to the tRNA(Ile)-lysidine synthase family.

The protein resides in the cytoplasm. It catalyses the reaction cytidine(34) in tRNA(Ile2) + L-lysine + ATP = lysidine(34) in tRNA(Ile2) + AMP + diphosphate + H(+). Functionally, ligates lysine onto the cytidine present at position 34 of the AUA codon-specific tRNA(Ile) that contains the anticodon CAU, in an ATP-dependent manner. Cytidine is converted to lysidine, thus changing the amino acid specificity of the tRNA from methionine to isoleucine. The polypeptide is tRNA(Ile)-lysidine synthase (Polaromonas naphthalenivorans (strain CJ2)).